The following is a 792-amino-acid chain: Putative cellulose synthase-like protein H3 (792 aa).

Helical transmembrane passes span 25–45 (AWML…VRRA) and 55–75 (VGGA…FVWL). Residues 132-154 (GRHVRDDGGPGARAAGGDGEQGA) form a disordered region. The span at 140–151 (GPGARAAGGDGE) shows a compositional bias: gly residues. Residues D181 and D501 contribute to the active site. 6 helical membrane-spanning segments follow: residues 579–599 (VWAV…YCLL), 613–632 (FNIT…VEYM), 650–670 (IISA…TIGL), 706–726 (VFIP…IGTW), 739–759 (GPGI…LPFV), and 768–788 (YGIP…FLFC).

The protein belongs to the glycosyltransferase 2 family. Plant cellulose synthase-like H subfamily.

The protein resides in the golgi apparatus membrane. Functionally, thought to be a Golgi-localized beta-glycan synthase that polymerize the backbones of noncellulosic polysaccharides (hemicelluloses) of plant cell wall. The chain is Putative cellulose synthase-like protein H3 (CSLH3) from Oryza sativa subsp. japonica (Rice).